Reading from the N-terminus, the 664-residue chain is MSGKPLLVTCGLPYTNGPCHIGHLRTYVPADFYVRYMRRSGEEVVFVCGSDNHGTPIVISAEQEGSTPRVLSERYHEHFYETFRRMDVVFDRFGMTDDAMNHETTRSIVERLIENGYVYAETVSQSYCPDCERFLPDRYVEGICPHCGAVARGDECDQGCGQHLEPGEIKDAICKVCGGKAEYREQEHYFFRLSAFREFLLDYLPALGGTSTARNYALGWVKELLHDWCITRTLDWGVKFPGRDDLVVYVWVDAPIGYISFTKEWAQKAGADWKDYWCGDETGVTHFIGGDIIYHHCIFWPALLKGAGYGLPSAVVASGMVTIEGKKFSKSRGYVVWTNDDYLDQGLPADYLRYYLLSYTNHTKELDFSWKVYGERVNNEIVGTLGNFIYRTMYFAEKEFSGVPDLAPRLEVIEEIERSLAAVDGLMRDYDFKNAVDAMMTLASFGNGYIQNNAPWKLIKEDRAAAEQVIADCLQIVKALVLVFEPLMPDAMQRAWTMLGYGDDIADHAIAEATAPVGARPLAKPSTLFAKVEKDQVAALEATLNERVERANAAAAPKMPVVSIEEFGNLDIRIAKVVSAEPIKGSKKLYKLVVDLGSEKRQVVSGIAQFYAPDELVGKDVALIANLAPAKIFGVESRGMILAAGDEASLLVPLRPVKPGTKIR.

The 'HIGH' region motif lies at 13 to 23 (PYTNGPCHIGH). Zn(2+) contacts are provided by Cys144, Cys147, Cys156, and Cys160. The 'KMSKS' region signature appears at 327–331 (KFSKS). Residue Lys330 coordinates ATP. The tRNA-binding domain maps to 566–664 (EFGNLDIRIA…RPVKPGTKIR (99 aa)).

Belongs to the class-I aminoacyl-tRNA synthetase family. MetG type 1 subfamily. Homodimer. Zn(2+) serves as cofactor.

It is found in the cytoplasm. It carries out the reaction tRNA(Met) + L-methionine + ATP = L-methionyl-tRNA(Met) + AMP + diphosphate. Functionally, is required not only for elongation of protein synthesis but also for the initiation of all mRNA translation through initiator tRNA(fMet) aminoacylation. This is Methionine--tRNA ligase from Methanoculleus marisnigri (strain ATCC 35101 / DSM 1498 / JR1).